We begin with the raw amino-acid sequence, 209 residues long: LexA repressor (209 aa).

A DNA-binding region (H-T-H motif) is located at residues 28–48 (RVELAKILGFRSANAAEEHLK). Residues serine 126 and lysine 163 each act as for autocatalytic cleavage activity in the active site.

It belongs to the peptidase S24 family. In terms of assembly, homodimer.

It carries out the reaction Hydrolysis of Ala-|-Gly bond in repressor LexA.. In terms of biological role, represses a number of genes involved in the response to DNA damage (SOS response), including recA and lexA. In the presence of single-stranded DNA, RecA interacts with LexA causing an autocatalytic cleavage which disrupts the DNA-binding part of LexA, leading to derepression of the SOS regulon and eventually DNA repair. This chain is LexA repressor, found in Psychromonas ingrahamii (strain DSM 17664 / CCUG 51855 / 37).